The following is a 269-amino-acid chain: Phosphate import ATP-binding protein PstB (269 aa).

One can recognise an ABC transporter domain in the interval alanine 22–valine 264. Glycine 54 to threonine 61 contacts ATP.

Belongs to the ABC transporter superfamily. Phosphate importer (TC 3.A.1.7) family. In terms of assembly, the complex is composed of two ATP-binding proteins (PstB), two transmembrane proteins (PstC and PstA) and a solute-binding protein (PstS).

It localises to the cell inner membrane. The catalysed reaction is phosphate(out) + ATP + H2O = ADP + 2 phosphate(in) + H(+). In terms of biological role, part of the ABC transporter complex PstSACB involved in phosphate import. Responsible for energy coupling to the transport system. This chain is Phosphate import ATP-binding protein PstB, found in Thermosynechococcus vestitus (strain NIES-2133 / IAM M-273 / BP-1).